Reading from the N-terminus, the 347-residue chain is Phosphate acyltransferase (347 aa).

This sequence belongs to the PlsX family. As to quaternary structure, homodimer. Probably interacts with PlsY.

It localises to the cytoplasm. It carries out the reaction a fatty acyl-[ACP] + phosphate = an acyl phosphate + holo-[ACP]. Its pathway is lipid metabolism; phospholipid metabolism. In terms of biological role, catalyzes the reversible formation of acyl-phosphate (acyl-PO(4)) from acyl-[acyl-carrier-protein] (acyl-ACP). This enzyme utilizes acyl-ACP as fatty acyl donor, but not acyl-CoA. This chain is Phosphate acyltransferase, found in Sinorhizobium medicae (strain WSM419) (Ensifer medicae).